A 240-amino-acid polypeptide reads, in one-letter code: uncharacterized protein (240 aa).

A signal peptide spans 1-30 (MNKSGMSLIITMLLLIGTAIVIGAAYYAWS).

This is an uncharacterized protein from Methanocaldococcus jannaschii (strain ATCC 43067 / DSM 2661 / JAL-1 / JCM 10045 / NBRC 100440) (Methanococcus jannaschii).